The following is a 325-amino-acid chain: Glutarate 2-hydroxylase (325 aa).

Fe cation is bound by residues His160, Asp162, and His292.

It belongs to the glutarate hydroxylase family. In terms of assembly, homotetramer. The cofactor is Fe(2+).

It catalyses the reaction glutarate + 2-oxoglutarate + O2 = (S)-2-hydroxyglutarate + succinate + CO2. The protein operates within amino-acid degradation. Acts as an alpha-ketoglutarate-dependent dioxygenase catalyzing hydroxylation of glutarate (GA) to L-2-hydroxyglutarate (L2HG). Functions in a L-lysine degradation pathway that proceeds via cadaverine, glutarate and L-2-hydroxyglutarate. The sequence is that of Glutarate 2-hydroxylase from Shigella boydii serotype 18 (strain CDC 3083-94 / BS512).